We begin with the raw amino-acid sequence, 195 residues long: Large ribosomal subunit protein bL17 (195 aa).

Residues Ala-125 to Ser-195 form a disordered region. Over residues Gln-136 to Pro-152 the composition is skewed to low complexity. Composition is skewed to acidic residues over residues Glu-153–Thr-173 and Thr-183–Ser-195.

This sequence belongs to the bacterial ribosomal protein bL17 family. In terms of assembly, part of the 50S ribosomal subunit. Contacts protein L32.

In Mycobacterium sp. (strain JLS), this protein is Large ribosomal subunit protein bL17.